Reading from the N-terminus, the 477-residue chain is Ectonucleotide pyrophosphatase/phosphodiesterase family member 5 (477 aa).

Positions 1–24 (MTSKFLLVSFILAALSLSTTFSLQ) are cleaved as a signal peptide. Zn(2+)-binding residues include aspartate 36 and threonine 72. Threonine 72 serves as the catalytic Nucleophile. N-linked (GlcNAc...) asparagine glycans are attached at residues asparagine 101 and asparagine 158. Aspartate 191, histidine 195, aspartate 238, and histidine 239 together coordinate Zn(2+). N-linked (GlcNAc...) asparagine glycans are attached at residues asparagine 292 and asparagine 329. Histidine 339 contributes to the Zn(2+) binding site. N-linked (GlcNAc...) asparagine glycosylation is found at asparagine 362, asparagine 369, asparagine 382, and asparagine 389. The chain crosses the membrane as a helical span at residues 432-452 (PYFIGVSLGSIIVIVFFVIFI).

It belongs to the nucleotide pyrophosphatase/phosphodiesterase family. Requires Zn(2+) as cofactor. Post-translationally, N-glycosylated.

It is found in the secreted. Its subcellular location is the membrane. Can hydrolyze NAD but cannot hydrolyze nucleotide di- and triphosphates. Lacks lysopholipase D activity. May play a role in neuronal cell communication. In Homo sapiens (Human), this protein is Ectonucleotide pyrophosphatase/phosphodiesterase family member 5.